The following is a 422-amino-acid chain: Probable sucrose-phosphatase 2 (422 aa).

It belongs to the sucrose phosphatase family. As to quaternary structure, homodimer. Mg(2+) serves as cofactor.

The catalysed reaction is sucrose 6(F)-phosphate + H2O = sucrose + phosphate. Its pathway is glycan biosynthesis; sucrose biosynthesis; sucrose from D-fructose 6-phosphate and UDP-alpha-D-glucose: step 2/2. In terms of biological role, catalyzes the final step of sucrose synthesis. The protein is Probable sucrose-phosphatase 2 (SPP2) of Arabidopsis thaliana (Mouse-ear cress).